Consider the following 390-residue polypeptide: LL-diaminopimelate aminotransferase 2 (390 aa).

Residues Tyr13 and Gly38 each contribute to the substrate site. Pyridoxal 5'-phosphate-binding positions include Tyr67, Ser102–Lys103, Tyr127, Asn177, Tyr208, and Ser236–Ser238. Substrate is bound by residues Lys103, Tyr127, and Asn177. Lys239 carries the N6-(pyridoxal phosphate)lysine modification. Residue Arg247 participates in pyridoxal 5'-phosphate binding. Substrate is bound at residue Arg365.

It belongs to the class-I pyridoxal-phosphate-dependent aminotransferase family. LL-diaminopimelate aminotransferase subfamily. In terms of assembly, homodimer. Requires pyridoxal 5'-phosphate as cofactor.

It catalyses the reaction (2S,6S)-2,6-diaminopimelate + 2-oxoglutarate = (S)-2,3,4,5-tetrahydrodipicolinate + L-glutamate + H2O + H(+). It participates in amino-acid biosynthesis; L-lysine biosynthesis via DAP pathway; LL-2,6-diaminopimelate from (S)-tetrahydrodipicolinate (aminotransferase route): step 1/1. Functionally, involved in the synthesis of meso-diaminopimelate (m-DAP or DL-DAP), required for both lysine and peptidoglycan biosynthesis. Catalyzes the direct conversion of tetrahydrodipicolinate to LL-diaminopimelate. In Trichormus variabilis (strain ATCC 29413 / PCC 7937) (Anabaena variabilis), this protein is LL-diaminopimelate aminotransferase 2.